The sequence spans 507 residues: Beta-glucosidase 13 (507 aa).

Residues 1–22 (MRTKYFSLLVFIIVLASNEVIA) form the signal peptide. Q50 contributes to the a beta-D-glucoside binding site. The N-linked (GlcNAc...) asparagine glycan is linked to N81. A beta-D-glucoside is bound by residues H154 and 199–200 (NE). Residue E200 is the Proton donor of the active site. A disulfide bond links C219 and C227. An N-linked (GlcNAc...) asparagine glycan is attached at N226. An a beta-D-glucoside-binding site is contributed by Y344. N358 carries an N-linked (GlcNAc...) asparagine glycan. Residues E414, W459, 466–467 (EW), and F475 contribute to the a beta-D-glucoside site. Residue E414 is the Nucleophile of the active site.

It belongs to the glycosyl hydrolase 1 family.

The catalysed reaction is Hydrolysis of terminal, non-reducing beta-D-glucosyl residues with release of beta-D-glucose.. The protein is Beta-glucosidase 13 of Arabidopsis thaliana (Mouse-ear cress).